A 62-amino-acid chain; its full sequence is Sucrase-isomaltase, intestinal (62 aa).

Over 2-12 (ARKKFSGLEIX) the chain is Cytoplasmic. A Phosphoserine; by PKA modification is found at S7. Residues 13-32 (LIVLFAIVLSIAIALVVVXA) traverse the membrane as a helical; Signal-anchor for type II membrane protein segment. The Lumenal segment spans residues 33–38 (SKXPAV). Y59 is modified (sulfotyrosine).

Belongs to the glycosyl hydrolase 31 family. The resulting sucrase and isomaltase subunits stay associated with one another in a complex by non-covalent linkages. Post-translationally, the precursor is proteolytically cleaved when exposed to pancreatic proteases in the intestinal lumen. Sulfated.

The protein resides in the apical cell membrane. The catalysed reaction is Hydrolysis of sucrose and maltose by an alpha-D-glucosidase-type action.. It carries out the reaction Hydrolysis of (1-&gt;6)-alpha-D-glucosidic linkages in some oligosaccharides produced from starch and glycogen by alpha-amylase, and in isomaltose.. Plays an important role in the final stage of carbohydrate digestion. Isomaltase activity is specific for both alpha-1,4- and alpha-1,6-oligosaccharides. The protein is Sucrase-isomaltase, intestinal (SI) of Sus scrofa (Pig).